A 583-amino-acid polypeptide reads, in one-letter code: Aspartate--tRNA ligase (583 aa).

L-aspartate is bound at residue Glu-169. The interval 193 to 196 (QLFK) is aspartate. Position 215 (Arg-215) interacts with L-aspartate. ATP contacts are provided by residues 215–217 (RDE) and Gln-224. His-443 is a binding site for L-aspartate. Glu-477 serves as a coordination point for ATP. An L-aspartate-binding site is contributed by Arg-484. 529–532 (GIDR) serves as a coordination point for ATP.

Belongs to the class-II aminoacyl-tRNA synthetase family. Type 1 subfamily. As to quaternary structure, homodimer.

It localises to the cytoplasm. The enzyme catalyses tRNA(Asp) + L-aspartate + ATP = L-aspartyl-tRNA(Asp) + AMP + diphosphate. In terms of biological role, catalyzes the attachment of L-aspartate to tRNA(Asp) in a two-step reaction: L-aspartate is first activated by ATP to form Asp-AMP and then transferred to the acceptor end of tRNA(Asp). The chain is Aspartate--tRNA ligase from Stenotrophomonas maltophilia (strain K279a).